We begin with the raw amino-acid sequence, 417 residues long: Gelsolin (417 aa).

One copy of the Gelsolin-like 4 repeat lies at 93 to 171 (KVPVLESHYG…VVQGKEPAHL (79 aa)). Residues glycine 107, aspartate 108, glutamate 138, aspartate 150, glycine 155, proline 157, threonine 187, asparagine 227, aspartate 228, glutamate 250, aspartate 331, aspartate 332, and glutamate 354 each coordinate Ca(2+). 2 Gelsolin-like repeats span residues 213–261 (RAVE…LKIL) and 316–392 (IEEV…PTFI).

Belongs to the villin/gelsolin family.

It is found in the cytoplasm. Its subcellular location is the cytoskeleton. Its function is as follows. Calcium-regulated, actin-modulating protein that binds to the plus (or barbed) ends of actin monomers or filaments, preventing monomer exchange (end-blocking or capping). It can promote the assembly of monomers into filaments (nucleation) as well as sever filaments already formed. Plays a role in ciliogenesis. The protein is Gelsolin (gsn) of Xenopus laevis (African clawed frog).